A 451-amino-acid polypeptide reads, in one-letter code: Phosphoglucosamine mutase (451 aa).

Residue Ser107 is the Phosphoserine intermediate of the active site. Ser107, Asp246, Asp248, and Asp250 together coordinate Mg(2+). Ser107 carries the phosphoserine modification.

The protein belongs to the phosphohexose mutase family. Mg(2+) is required as a cofactor. Activated by phosphorylation.

The catalysed reaction is alpha-D-glucosamine 1-phosphate = D-glucosamine 6-phosphate. Catalyzes the conversion of glucosamine-6-phosphate to glucosamine-1-phosphate. The protein is Phosphoglucosamine mutase of Burkholderia cenocepacia (strain HI2424).